The sequence spans 523 residues: Polypyrimidine tract-binding protein 3 (523 aa).

Positions 1 to 25 (MNSSTSAGVYANGNDNKKFKGDRPP) are disordered. 3 consecutive RRM domains span residues 30–114 (RVLH…NLPN), 153–229 (LRII…FSKL), and 329–403 (SVLL…LSKH). Lys36 participates in a covalent cross-link: Glycyl lysine isopeptide (Lys-Gly) (interchain with G-Cter in SUMO2). Tyr98 is modified (phosphotyrosine). Thr109 carries the post-translational modification Phosphothreonine. A Glycyl lysine isopeptide (Lys-Gly) (interchain with G-Cter in SUMO2) cross-link involves residue Lys187. Lys394 carries the N6-acetyllysine modification. Residues 406 to 426 (VQLPREGQEDQGLTKDFSNSP) are disordered. Ser425 carries the post-translational modification Phosphoserine. The 76-residue stretch at 446 to 521 (ATLHLSNIPP…HHLRVSFSKS (76 aa)) folds into the RRM 4 domain.

In terms of assembly, interacts with THBS4 (via the acidic amphipathic C-terminus).

Functionally, RNA-binding protein that mediates pre-mRNA alternative splicing regulation. Plays a role in the regulation of cell proliferation, differentiation and migration. Positive regulator of EPO-dependent erythropoiesis. Participates in cell differentiation regulation by repressing tissue-specific exons. Promotes Fas exon 6 skipping. Binds RNA, preferentially to both poly(G) and poly(U). The sequence is that of Polypyrimidine tract-binding protein 3 (Ptbp3) from Mus musculus (Mouse).